Here is a 215-residue protein sequence, read N- to C-terminus: Glutathione S-transferase stcT (215 aa).

The GST N-terminal domain occupies 2–82; sequence PFGTLYTRPF…YDSNTTLLGT (81 aa). 2 residues coordinate glutathione: Lys-52 and Glu-66. Residue Lys-52 participates in substrate binding. Positions 83 to 211 constitute a GST C-terminal domain; it reads TGQEYASIIR…PVLAEYEMPI (129 aa).

Belongs to the GST superfamily. Glutathione is required as a cofactor.

Its pathway is mycotoxin biosynthesis; sterigmatocystin biosynthesis. Functionally, glutathione S-transferase; part of the gene cluster that mediates the biosynthesis of sterigmatocystin (ST), a polyketide-derived furanocoumarin which is part of the most toxic and carcinogenic compounds among the known mycotoxins. The first step in the biosynthesis of sterigmatocystin is the production of hexanoate by the fatty acid synthase (FAS) units stcJ and stcK. The polyketide backbone is assembled by the non-reducing polyketide synthase stcA by condensation of the starter hexanoyl-CoA and 7 malonyl-CoA extender units followed by cyclization and release of norsolorinic acid. Norsolorinic acid is the first stable intermediate in the biosynthesis of sterigmatocystin and is converted into averantin (AVN) by the ketoreductase stcE which reduces the hexanoate ketone to an alcohol. Averantin is then oxidized into 5'-hydroxyaverantin (HAVN) by the cytochrome P450 monooxygenase stcF. 5'-hydroxyaverantin is further converted to 5'-oxyaverantin (OAVN) by the 5'-hydroxyaverantin dehydrogenase stcG. The next step is the conversion of OAVN into averufin (AVF) which is catalyzed by a yet to be identified enzyme. The cytochrome P450 monooxygenase stcB and the flavin-binding monooxygenase stcW are both required for the conversion of averufin to 1-hydroxyversicolorone. The esterase stcI probably catalyzes the formation of versiconal hemiacetal acetate from 1-hydroxyversicolorone. The oxydoreductase stcN then probably catalyzes the biosynthetic step from versiconal to versicolorin B (VERB). The next step is performed by the versicolorin B desaturase stcL to produce versicolorin A (VERA). The ketoreductase stcU and the cytochrome P450 monooxygenase stcS are involved in the conversion of versicolorin A to demethylsterigmatocystin. The Baeyer-Villiger oxidas stcQ and the reductase stcR might be involved in the biosynthetic step from versicolorin A to demethylsterigmatocystin. The final step in the biosynthesis of sterigmatocystin is the methylation of demethylsterigmatocystin catalyzed by the methyltransferase stcP. This chain is Glutathione S-transferase stcT, found in Emericella nidulans (strain FGSC A4 / ATCC 38163 / CBS 112.46 / NRRL 194 / M139) (Aspergillus nidulans).